A 136-amino-acid polypeptide reads, in one-letter code: Protein PsiE homolog (136 aa).

The next 4 helical transmembrane spans lie at 15-35 (AMQTVLNLGLLCLGIILIVFL), 58-78 (VEGLVVYFLYFEFIALIVKYF), 83-103 (HFPLRYFVYIGITAIVRLIII), and 108-128 (PMAVLIYSAAILILVITLWLC).

Belongs to the PsiE family.

The protein resides in the cell inner membrane. The sequence is that of Protein PsiE homolog from Klebsiella pneumoniae (strain 342).